Consider the following 376-residue polypeptide: Succinate--CoA ligase [ADP-forming] subunit beta (376 aa).

The ATP-grasp domain maps to 9–237 (KEIFSKYGIP…PTEEEKVEAD (229 aa)). Residues Lys-46, 53 to 55 (GRG), Val-95, and Glu-100 contribute to the ATP site. Asn-192 and Asp-206 together coordinate Mg(2+). Residues Asn-257 and 314–316 (GIT) each bind substrate.

It belongs to the succinate/malate CoA ligase beta subunit family. As to quaternary structure, heterotetramer of two alpha and two beta subunits. It depends on Mg(2+) as a cofactor.

It carries out the reaction succinate + ATP + CoA = succinyl-CoA + ADP + phosphate. It catalyses the reaction GTP + succinate + CoA = succinyl-CoA + GDP + phosphate. It functions in the pathway carbohydrate metabolism; tricarboxylic acid cycle; succinate from succinyl-CoA (ligase route): step 1/1. In terms of biological role, succinyl-CoA synthetase functions in the citric acid cycle (TCA), coupling the hydrolysis of succinyl-CoA to the synthesis of either ATP or GTP and thus represents the only step of substrate-level phosphorylation in the TCA. The beta subunit provides nucleotide specificity of the enzyme and binds the substrate succinate, while the binding sites for coenzyme A and phosphate are found in the alpha subunit. This Bacteroides thetaiotaomicron (strain ATCC 29148 / DSM 2079 / JCM 5827 / CCUG 10774 / NCTC 10582 / VPI-5482 / E50) protein is Succinate--CoA ligase [ADP-forming] subunit beta.